We begin with the raw amino-acid sequence, 69 residues long: Amphipathic peptide Hp1404 (69 aa).

A signal peptide spans 1–23 (MKTQFAILMITVVLMQMLVQTEG). Phenylalanine 37 carries the post-translational modification Phenylalanine amide. The propeptide occupies 41-69 (GLKNLDQLDDSFDSDLSDADVKLLREMFK).

It belongs to the non-disulfide-bridged peptide (NDBP) superfamily. Short antimicrobial peptide (group 4) family. As to expression, expressed by the venom gland.

Its subcellular location is the secreted. It localises to the target cell membrane. Its activity is regulated as follows. Antibacterial activity is decreased by serum. In terms of biological role, antimicrobial peptide that acts by inducing concentration-dependent membrane disruption, implying a membrane-lytic mode of action. Acts with potent activity against Gram-positive bacteria (MIC=4.04-16.16 uM) including methicillin-resistant S.aureus (MRSA). Its activity on Gram-negative bacteria is controversial. Li and colleagues (2014) describe no activity towards E.coli and P.aeruginosa, while Kim and colleagues (2018) describe a potent activity towards P.aeruginosa (MIC=3.13-12.5 uM), and Luo and colleagues (2021) describe a potent activity against antibiotic-sensitive and -resistant Acinetobacter baumannii strains (MIC=3.2-10 uM). On S.aureus, possibly acts by impairing an unknown intracellular target and/or by interacting with the membrane, leading to the lateral expansion of the membrane area at high MIC concentrations, resulting in the formation of mesosome-like structures that leads to cell lysis. Shows moderate inhibition of P.aeruginosa biofilm formation. Administration of this peptide at sub-MIC concentrations in multiple treatments does not lead to resistance in S.aureus. Exhibits low toxicity and hemolytic activity against mammalian cell lines and BALB/c mice. In vivo, improves the survival rate of the MRSA infected BALB/c mice in the peritonitis model. The chain is Amphipathic peptide Hp1404 from Heterometrus petersii (Asian forest scorpion).